We begin with the raw amino-acid sequence, 319 residues long: tRNA uridine(34) hydroxylase (319 aa).

The Rhodanese domain maps to 133-231 (EDPDSVVIDT…YLEDVSSENS (99 aa)). Catalysis depends on cysteine 191, which acts as the Cysteine persulfide intermediate.

This sequence belongs to the TrhO family.

The catalysed reaction is uridine(34) in tRNA + AH2 + O2 = 5-hydroxyuridine(34) in tRNA + A + H2O. Functionally, catalyzes oxygen-dependent 5-hydroxyuridine (ho5U) modification at position 34 in tRNAs. The polypeptide is tRNA uridine(34) hydroxylase (Prochlorococcus marinus (strain NATL1A)).